The following is a 69-amino-acid chain: DNA-directed RNA polymerase subunit omega (69 aa).

Belongs to the RNA polymerase subunit omega family. As to quaternary structure, the RNAP catalytic core consists of 2 alpha, 1 beta, 1 beta' and 1 omega subunit. When a sigma factor is associated with the core the holoenzyme is formed, which can initiate transcription.

The enzyme catalyses RNA(n) + a ribonucleoside 5'-triphosphate = RNA(n+1) + diphosphate. Functionally, promotes RNA polymerase assembly. Latches the N- and C-terminal regions of the beta' subunit thereby facilitating its interaction with the beta and alpha subunits. The sequence is that of DNA-directed RNA polymerase subunit omega from Heliobacterium modesticaldum (strain ATCC 51547 / Ice1).